The sequence spans 123 residues: uncharacterized protein (123 aa).

Disordered regions lie at residues 1 to 21 (MGAPGGKINRPRTELKKKLFK) and 82 to 123 (EKTA…EDES).

This is an uncharacterized protein from Homo sapiens (Human).